The sequence spans 150 residues: uncharacterized protein (150 aa).

A run of 5 repeats spans residues 101–105 (FHEVN), 106–110 (HHEVN), 111–115 (HHKIN), 116–120 (HHEVN), and 121–125 (HHKIN). Residues 101–125 (FHEVNHHEVNHHKINHHEVNHHKIN) are 5 X 5 AA tandem repeats of [FH]-H-[EK]-[IV]-N.

It belongs to the asfivirus D129L family.

This is an uncharacterized protein from African swine fever virus (isolate Tick/Malawi/Lil 20-1/1983) (ASFV).